The chain runs to 341 residues: Phosphoribosylformylglycinamidine cyclo-ligase (341 aa).

Belongs to the AIR synthase family.

Its subcellular location is the cytoplasm. It carries out the reaction 2-formamido-N(1)-(5-O-phospho-beta-D-ribosyl)acetamidine + ATP = 5-amino-1-(5-phospho-beta-D-ribosyl)imidazole + ADP + phosphate + H(+). Its pathway is purine metabolism; IMP biosynthesis via de novo pathway; 5-amino-1-(5-phospho-D-ribosyl)imidazole from N(2)-formyl-N(1)-(5-phospho-D-ribosyl)glycinamide: step 2/2. The protein is Phosphoribosylformylglycinamidine cyclo-ligase of Caldicellulosiruptor bescii (strain ATCC BAA-1888 / DSM 6725 / KCTC 15123 / Z-1320) (Anaerocellum thermophilum).